A 449-amino-acid polypeptide reads, in one-letter code: Baeyer-Villiger oxidase GME11358 (449 aa).

This sequence belongs to the questin oxidase family.

The protein operates within secondary metabolite biosynthesis. In terms of biological role, baeyer-Villiger oxidase; part of the gene cluster that mediates the biosynthesis of dibenzodioxocinones such as pestalotiollide B, a novel class of inhibitors against cholesterol ester transfer protein (CEPT). The biosynthesis initiates from condensation of acetate and malonate units catalyzed by the non-reducing PKS pks8/GME11356. Pks8/GME11356 lacks a thioesterase (TE) domain, which is important to the cyclizing of the third ring of atrochrysone carboxylic acid, and the esterase GME11355 might play the role of TE and catalyzes the cyclization reaction of the C ring. The lactamase-like protein GME11357 (or other beta-lactamases in Pestalotiopsis microspora) probably hydrolyzes the thioester bond between the ACP of pks8/GME11356 and the intermediate to release atrochrysone carboxylic acid, which is spontaneously dehydrates to form endocrocin anthrone. Endocrocin anthrone is further converted to emodin via the endocrocin intermediate. Emodin is then oxidized by several enzymes such as the Baeyer-Villiger oxidase GME11358, the oxidoreductase GME11367, the short chain dehydrogenase/reductase GME11373, as well as by other oxidoreductases from the cluster, to modify the A and C rings and open the B ring, and finally yield monodictyphenone. The prenyltransferase GME11375 may catalyze the addition reaction between the C5 side chains and the carbon bone of dibenzodioxocinones. The remaining biochemical reactions to the final product dibenzodioxocinones should be methylation catalyzed by methyltransferase GME11366 and reduction and lactonization reaction catalyzed by a series of oxidordeuctases. The chain is Baeyer-Villiger oxidase GME11358 from Pestalotiopsis microspora.